Reading from the N-terminus, the 240-residue chain is UDP-2,3-diacylglucosamine hydrolase (240 aa).

Residues Asp-8, His-10, Asp-41, Asn-79, and His-114 each contribute to the Mn(2+) site. 79–80 (NR) lines the substrate pocket. Residues Asp-122, Ser-160, Asn-164, Lys-167, and His-195 each contribute to the substrate site. Mn(2+)-binding residues include His-195 and His-197.

This sequence belongs to the LpxH family. The cofactor is Mn(2+).

Its subcellular location is the cell inner membrane. It carries out the reaction UDP-2-N,3-O-bis[(3R)-3-hydroxytetradecanoyl]-alpha-D-glucosamine + H2O = 2-N,3-O-bis[(3R)-3-hydroxytetradecanoyl]-alpha-D-glucosaminyl 1-phosphate + UMP + 2 H(+). It participates in glycolipid biosynthesis; lipid IV(A) biosynthesis; lipid IV(A) from (3R)-3-hydroxytetradecanoyl-[acyl-carrier-protein] and UDP-N-acetyl-alpha-D-glucosamine: step 4/6. Functionally, hydrolyzes the pyrophosphate bond of UDP-2,3-diacylglucosamine to yield 2,3-diacylglucosamine 1-phosphate (lipid X) and UMP by catalyzing the attack of water at the alpha-P atom. Involved in the biosynthesis of lipid A, a phosphorylated glycolipid that anchors the lipopolysaccharide to the outer membrane of the cell. In Escherichia coli O7:K1 (strain IAI39 / ExPEC), this protein is UDP-2,3-diacylglucosamine hydrolase.